The chain runs to 387 residues: MSRTNLPIQPAKMSDATSSKPQIFSIQDLKQAASDKMSQMYRDYYNGGAMDNITLATNEAAFDRYLLRPRVLRNVSNIDMTTTLWGTKAALPLGVSPSAMHRLAHADGEVGTSKACAARHIPMILSALSNDTLEDVSGQSSDGSTPYAIQVSPFKNRQITTNLLNRAKAAGYKAVVLTVDAPMFGRRLDDLRNGFSVPPGFSFPNLSAQTQSGSGGLGGGIPDLSFDTGATWEEKIAWMKSQTDLQLWVKGVTSPLDAQIAIEQGVDGIIISNHGGRQLDTTPATIDILREIAPVAKGKTRIAIDGGFRRGSDIFKAVALGADFVFVGRIAIWGLAYDGSNGVGLALDLLINEFKLCMGLAGCSKISDITPAHLSLLNAKGVLEGVY.

The tract at residues 1-20 (MSRTNLPIQPAKMSDATSSK) is disordered. Residues 18–379 (SSKPQIFSIQ…TPAHLSLLNA (362 aa)) enclose the FMN hydroxy acid dehydrogenase domain. An a 2-oxocarboxylate-binding site is contributed by tyrosine 44. Serine 126, glutamine 150, and threonine 178 together coordinate FMN. Residue arginine 187 participates in a 2-oxocarboxylate binding. Position 250 (lysine 250) interacts with FMN. The active-site Proton acceptor is histidine 274. An a 2-oxocarboxylate-binding site is contributed by arginine 277. FMN is bound by residues 305–309 (DGGFR) and 328–329 (GR).

This sequence belongs to the FMN-dependent alpha-hydroxy acid dehydrogenase family. The cofactor is FMN.

The protein operates within mycotoxin biosynthesis. Its function is as follows. Oxidase; part of the gene cluster that mediates the biosynthesis of fusaric acid, a mycotoxin with low to moderate toxicity to animals and humans, but with high phytotoxic properties. L-aspartate is suggested as fusaric acid amino acid precursor that is activated and further processed to O-acetyl-L-homoserine by cluster enzymes aspartate kinase FUB3 and homoserine O-acetyltransferase FUB5, as well as enzymes of the primary metabolism. The polyketide synthase (PKS) FUB1 generates the triketide trans-2-hexenal which is presumptively released by the hydrolase FUB4 and linked to the NRPS-bound amino acid precursor by NAD(P)-dependent dehydrogenase FUB6. FUB1, FUB4, and the non-canonical NRPS Fub8 may form an enzyme complex. Further processing of the NRPS-bound intermediate might be carried out by FUB6 and the sulfhydrylase FUB7, enabling a spontaneous electrocyclization to close the carbon backbone of fusaric acid. Dihydrofusaric acid is likely to be released via reduction by the thioester reductase (TR) domain of FUB8 whereupon the final oxidation to fusaric acid may (also) be performed by the FMN-dependent dehydrogenase FUB9. The protein is Oxidase FUB9 of Gibberella moniliformis (strain M3125 / FGSC 7600) (Maize ear and stalk rot fungus).